The following is a 447-amino-acid chain: Tubulin alpha-2 chain (447 aa).

Residues Gln-11, Glu-71, Gly-144, Thr-145, Thr-179, Asn-206, and Asn-228 each contribute to the GTP site. Glu-71 serves as a coordination point for Mg(2+). Glu-254 is a catalytic residue.

The protein belongs to the tubulin family. In terms of assembly, dimer of alpha and beta chains. A typical microtubule is a hollow water-filled tube with an outer diameter of 25 nm and an inner diameter of 15 nM. Alpha-beta heterodimers associate head-to-tail to form protofilaments running lengthwise along the microtubule wall with the beta-tubulin subunit facing the microtubule plus end conferring a structural polarity. Microtubules usually have 13 protofilaments but different protofilament numbers can be found in some organisms and specialized cells. The cofactor is Mg(2+). In terms of processing, undergoes a tyrosination/detyrosination cycle, the cyclic removal and re-addition of a C-terminal tyrosine residue by the enzymes tubulin tyrosine carboxypeptidase (TTCP) and tubulin tyrosine ligase (TTL), respectively.

The protein localises to the cytoplasm. The protein resides in the cytoskeleton. The enzyme catalyses GTP + H2O = GDP + phosphate + H(+). In terms of biological role, tubulin is the major constituent of microtubules, a cylinder consisting of laterally associated linear protofilaments composed of alpha- and beta-tubulin heterodimers. Microtubules grow by the addition of GTP-tubulin dimers to the microtubule end, where a stabilizing cap forms. Below the cap, tubulin dimers are in GDP-bound state, owing to GTPase activity of alpha-tubulin. In Eleusine indica (Goosegrass), this protein is Tubulin alpha-2 chain (TUBA2).